Here is a 199-residue protein sequence, read N- to C-terminus: Large ribosomal subunit protein bL25 (199 aa).

It belongs to the bacterial ribosomal protein bL25 family. CTC subfamily. As to quaternary structure, part of the 50S ribosomal subunit; part of the 5S rRNA/L5/L18/L25 subcomplex. Contacts the 5S rRNA. Binds to the 5S rRNA independently of L5 and L18.

Its function is as follows. This is one of the proteins that binds to the 5S RNA in the ribosome where it forms part of the central protuberance. The chain is Large ribosomal subunit protein bL25 from Pelobacter propionicus (strain DSM 2379 / NBRC 103807 / OttBd1).